The primary structure comprises 324 residues: Viral cathepsin (324 aa).

Residues 1–16 (MNKIVLYLLVYGAVQC) form the signal peptide. The propeptide at 17–113 (AAYDVLKAPN…VVLDRPPDKG (97 aa)) is activation peptide. Intrachain disulfides connect cysteine 134/cysteine 175, cysteine 168/cysteine 208, and cysteine 263/cysteine 311. Residue cysteine 137 is part of the active site. A glycan (N-linked (GlcNAc...) asparagine; by host) is linked at asparagine 159. Residues histidine 270 and asparagine 290 contribute to the active site.

Belongs to the peptidase C1 family. Post-translationally, synthesized as an inactive proenzyme and activated by proteolytic removal of the inhibitory propeptide.

It catalyses the reaction Endopeptidase of broad specificity, hydrolyzing substrates of both cathepsin L and cathepsin B.. Functionally, cysteine protease that plays an essential role in host liquefaction to facilitate horizontal transmission of the virus. May participate in the degradation of foreign protein expressed by the baculovirus system. The polypeptide is Viral cathepsin (Vcath) (Choristoneura fumiferana nuclear polyhedrosis virus (CfMNPV)).